We begin with the raw amino-acid sequence, 632 residues long: Phospholipid:diacylglycerol acyltransferase (632 aa).

The span at 1–15 shows a compositional bias: basic residues; that stretch reads MASSKKSKTHKKKKE. Residues 1–47 are disordered; it reads MASSKKSKTHKKKKEVKSPIDLPNSKKPTRALSEQPSASETQSVSNK. Over 1-56 the chain is Cytoplasmic; the sequence is MASSKKSKTHKKKKEVKSPIDLPNSKKPTRALSEQPSASETQSVSNKSRKSKFGKR. A compositionally biased stretch (polar residues) spans 32 to 46; it reads LSEQPSASETQSVSN. The chain crosses the membrane as a helical span at residues 57 to 77; sequence LNFILGAILGICGAFFFAVGD. Residues 78 to 632 are Lumenal-facing; that stretch reads DNAVFDPATL…NEINLDKPRN (555 aa). A substrate-binding site is contributed by D136. Residue S293 is the Acyl-ester intermediate of the active site. M294 lines the substrate pocket. Active-site charge relay system residues include D535 and H586.

This sequence belongs to the AB hydrolase superfamily. Lipase family.

The protein localises to the endoplasmic reticulum membrane. The catalysed reaction is a glycerophospholipid + a 1,2-diacyl-sn-glycerol = a monoacylglycerophospholipid + a triacyl-sn-glycerol. The protein operates within glycerolipid metabolism; triacylglycerol biosynthesis. Its function is as follows. Catalyzes triacylglycerol (TAG) formation by an acyl-CoA independent pathway. The enzyme specifically transfers acyl groups from the sn-2 position of a phospholipid to diacylglycerol (DAG), thus forming an sn-1-lysophospholipid. Plays a major role in triacylglycerol formation at log phase. Involved in lipid particle synthesis from the endoplasmic reticulum, promoting localized TAG production at discrete ER subdomains. This chain is Phospholipid:diacylglycerol acyltransferase (plh1), found in Schizosaccharomyces pombe (strain 972 / ATCC 24843) (Fission yeast).